The primary structure comprises 879 residues: Pentatricopeptide repeat-containing protein At1g71210, mitochondrial (879 aa).

The N-terminal 44 residues, Met1–Phe44, are a transit peptide targeting the mitochondrion. PPR repeat units lie at residues Ser181–Leu215, Asp216–Arg246, Cys250–Asn280, Cys285–Asn319, Met320–Leu355, Glu356–Pro390, Asn391–Pro425, Thr426–Leu460, Gly461–Pro495, Lys496–Thr530, Ser531–Pro565, Thr566–Ser597, Lys602–Pro636, Thr637–Gln667, Lys671–Pro705, and Ser706–Ile740.

It belongs to the PPR family. P subfamily.

It is found in the mitochondrion. The sequence is that of Pentatricopeptide repeat-containing protein At1g71210, mitochondrial from Arabidopsis thaliana (Mouse-ear cress).